Reading from the N-terminus, the 333-residue chain is Protoheme IX farnesyltransferase (333 aa).

Positions 1–13 (MVSSTSQIISTSP) are enriched in low complexity. Residues 1-21 (MVSSTSQIISTSPSRDDVVPS) are disordered. Helical transmembrane passes span 38–58 (LIPLLLATTLGGMALSEGWPL), 63–83 (LACTLGGGALAAAAAGALNCL), 109–129 (AVFTGAISCTLAAAALLVSGV), 132–152 (LAAGLSLLGLCSYVLLYTAFL), 160–180 (IVIGGVAGAIPPLVGAAAATG), 188–208 (WLFALVMVWTPAHFWALAILL), 245–265 (CFGVFALPEGGALYGILLVPF), and 286–306 (AKGLFRWSILYMFGICLLLVV).

It belongs to the UbiA prenyltransferase family. Protoheme IX farnesyltransferase subfamily.

The protein localises to the cell inner membrane. The enzyme catalyses heme b + (2E,6E)-farnesyl diphosphate + H2O = Fe(II)-heme o + diphosphate. The protein operates within porphyrin-containing compound metabolism; heme O biosynthesis; heme O from protoheme: step 1/1. Converts heme B (protoheme IX) to heme O by substitution of the vinyl group on carbon 2 of heme B porphyrin ring with a hydroxyethyl farnesyl side group. In Prochlorococcus marinus (strain SARG / CCMP1375 / SS120), this protein is Protoheme IX farnesyltransferase.